The primary structure comprises 386 residues: WD repeat-containing protein 89 (386 aa).

WD repeat units follow at residues 21-65 (KEPT…LLRE), 68-107 (GSPGLLSGVSFANSCDSVYSASTDGTVKCWDARGASEKPV), 112-156 (GYPS…QDLS), 167-207 (THSD…EEDA), 213-253 (NSVS…TDEP), and 318-357 (GHAATVRSFCWNVSEDSLLTGGEDAQLLLWKPGAMEKTFT).

The sequence is that of WD repeat-containing protein 89 (Wdr89) from Mus musculus (Mouse).